We begin with the raw amino-acid sequence, 275 residues long: Peptidoglycan-N-acetylglucosamine deacetylase BC_1960 (275 aa).

In terms of domain architecture, NodB homology spans 81–262 (AEVALTFDDG…QLKTKGARFV (182 aa)). Asp88 (proton acceptor) is an active-site residue. Residues Asp89, His139, and His143 each contribute to the Zn(2+) site. The residue at position 179 (Pro179) is a 2-hydroxyproline; partial. His233 acts as the Proton donor in catalysis.

It belongs to the polysaccharide deacetylase family. The cofactor is Zn(2+). In terms of processing, hydroxylated on Pro-179. Hydroxylation alters the active site and enhances significantly deacetylase activity, probably by creating a more favorable environment for transition-state stabilization. It might be autocatalytic.

It catalyses the reaction peptidoglycan-N-acetyl-D-glucosamine + H2O = peptidoglycan-D-glucosamine + acetate.. Deacetylase activity is stimulated by hydroxylation on Pro-179. Inhibited by CuCl(2) and ZnCl(2). Inhibited by the hydroxamate N-hydroxy-4-(naphthalene-1-yl)benzamide (NHNB). Functionally, catalyzes the deacetylation of N-acetylglucosamine (GlcNAc) residues in peptidoglycan. Also acts on soluble chitin substrates and N-acetylchitooligomers. Acts on cell wall peptidoglycan from the Gram-positive bacteria B.cereus and B.subtilis and the Gram-negative bacterium H.pylori. Not active on acetylated xylan. This chain is Peptidoglycan-N-acetylglucosamine deacetylase BC_1960, found in Bacillus cereus (strain ATCC 14579 / DSM 31 / CCUG 7414 / JCM 2152 / NBRC 15305 / NCIMB 9373 / NCTC 2599 / NRRL B-3711).